The following is a 1302-amino-acid chain: Phosphoribosylformylglycinamidine synthase (1302 aa).

ATP is bound by residues 307-318 (GASTGSGGEIRD) and Ala678. Mg(2+) contacts are provided by Glu718, Asn722, and Asp891. Positions 1049–1302 (MAILREQGVN…MFQNARKNIG (254 aa)) constitute a Glutamine amidotransferase type-1 domain. The active-site Nucleophile is the Cys1142. Active-site residues include His1267 and Glu1269.

It in the N-terminal section; belongs to the FGAMS family. Monomer.

It is found in the cytoplasm. The enzyme catalyses N(2)-formyl-N(1)-(5-phospho-beta-D-ribosyl)glycinamide + L-glutamine + ATP + H2O = 2-formamido-N(1)-(5-O-phospho-beta-D-ribosyl)acetamidine + L-glutamate + ADP + phosphate + H(+). Its pathway is purine metabolism; IMP biosynthesis via de novo pathway; 5-amino-1-(5-phospho-D-ribosyl)imidazole from N(2)-formyl-N(1)-(5-phospho-D-ribosyl)glycinamide: step 1/2. Phosphoribosylformylglycinamidine synthase involved in the purines biosynthetic pathway. Catalyzes the ATP-dependent conversion of formylglycinamide ribonucleotide (FGAR) and glutamine to yield formylglycinamidine ribonucleotide (FGAM) and glutamate. The polypeptide is Phosphoribosylformylglycinamidine synthase (Vibrio parahaemolyticus serotype O3:K6 (strain RIMD 2210633)).